The sequence spans 244 residues: Carboxy-S-adenosyl-L-methionine synthase (244 aa).

Residues Tyr-41, 66 to 68, 91 to 92, 119 to 120, Asn-134, and Arg-201 contribute to the S-adenosyl-L-methionine site; these read GCS, DN, and DI.

It belongs to the class I-like SAM-binding methyltransferase superfamily. Cx-SAM synthase family. In terms of assembly, homodimer.

The enzyme catalyses prephenate + S-adenosyl-L-methionine = carboxy-S-adenosyl-L-methionine + 3-phenylpyruvate + H2O. Catalyzes the conversion of S-adenosyl-L-methionine (SAM) to carboxy-S-adenosyl-L-methionine (Cx-SAM). This is Carboxy-S-adenosyl-L-methionine synthase from Photobacterium profundum (strain SS9).